The sequence spans 334 residues: tRNA methyltransferase 10 homolog A (334 aa).

Disordered stretches follow at residues 1–101 (MSLE…SRKR) and 290–334 (PLTE…EQNS). The span at 26–40 (HAGNNTPLQENSSAP) shows a compositional bias: polar residues. Positions 62–94 (KQWEDQRELRKQKRKEKRQKRKLERQAQAEHNI) form a coiled coil. Basic residues predominate over residues 71 to 84 (RKQKRKEKRQKRKL). Over residues 85-98 (ERQAQAEHNIDANS) the composition is skewed to basic and acidic residues. The SAM-dependent MTase TRM10-type domain occupies 98 to 289 (SRKRFRHEVQ…SVLPQRKGAI (192 aa)). A compositionally biased stretch (acidic residues) spans 305 to 317 (QEDGEDSDSDSSI).

It belongs to the class IV-like SAM-binding methyltransferase superfamily. TRM10 family.

The catalysed reaction is guanosine(9) in tRNA + S-adenosyl-L-methionine = N(1)-methylguanosine(9) in tRNA + S-adenosyl-L-homocysteine + H(+). In terms of biological role, S-adenosyl-L-methionine-dependent guanine N(1)-methyltransferase that catalyzes the formation of N(1)-methylguanine at position 9 (m1G9) in tRNAs. Probably not able to catalyze formation of N(1)-methyladenine at position 9 (m1A9) in tRNAs. In Xenopus tropicalis (Western clawed frog), this protein is tRNA methyltransferase 10 homolog A (trmt10a).